We begin with the raw amino-acid sequence, 348 residues long: NADH-ubiquinone oxidoreductase chain 2 (348 aa).

The next 10 helical transmembrane spans lie at 3–23 (PFIL…TFAS), 24–44 (SHWL…IPLM), 60–80 (FITQ…NAWI), 95–115 (ASML…HFWL), 136–156 (LAPF…ITFL), 177–197 (ILAY…QFNQ), 198–218 (QLAL…FMIF), 239–259 (LTAI…LSGF), 273–293 (DIPL…YFYL), and 325–345 (LAIS…TLAL).

Belongs to the complex I subunit 2 family.

Its subcellular location is the mitochondrion inner membrane. The catalysed reaction is a ubiquinone + NADH + 5 H(+)(in) = a ubiquinol + NAD(+) + 4 H(+)(out). Functionally, core subunit of the mitochondrial membrane respiratory chain NADH dehydrogenase (Complex I) that is believed to belong to the minimal assembly required for catalysis. Complex I functions in the transfer of electrons from NADH to the respiratory chain. The immediate electron acceptor for the enzyme is believed to be ubiquinone. The sequence is that of NADH-ubiquinone oxidoreductase chain 2 (MT-ND2) from Gadus morhua (Atlantic cod).